The following is a 610-amino-acid chain: T-cell immunomodulatory protein (610 aa).

A signal peptide spans 1–32 (MAAGLLPSARAVLALLFLGLALLSVGPAPAQA). 8 N-linked (GlcNAc...) asparagine glycosylation sites follow: asparagine 35, asparagine 94, asparagine 123, asparagine 138, asparagine 145, asparagine 150, asparagine 175, and asparagine 241. An FG-GAP 1; atypical repeat occupies 98 to 135 (LVTSVVPGDYDGDSQMDVLLTYFPQNHSNNELGAVIFW). The FG-GAP 2; atypical repeat unit spans residues 153–183 (FHDQPLIMDFNGDLIPDVFAITNESSQPQIL). The stretch at 256–291 (VVGQSAFADFDGDGHMDHLLPGCEDKDCQKSAIYLM) is one FG-GAP 3; atypical repeat. N-linked (GlcNAc...) asparagine glycosylation is found at asparagine 351, asparagine 369, and asparagine 480. The helical transmembrane segment at 564-584 (IVLLTAVALTGVCVFILAIIA) threads the bilayer.

It belongs to the TIP family. Interacts with RUVBL1, RUVBL2 and alpha-tubulin.

Its subcellular location is the secreted. It is found in the cell membrane. In terms of biological role, modulator of T-cell function. Has a protective effect in graft versus host disease model. This is T-cell immunomodulatory protein from Rattus norvegicus (Rat).